Reading from the N-terminus, the 87-residue chain is Small ribosomal subunit protein bS20 (87 aa).

The tract at residues 67 to 87 (HKNNGSRKASRLDAYVQSKQQ) is disordered.

This sequence belongs to the bacterial ribosomal protein bS20 family.

Binds directly to 16S ribosomal RNA. This is Small ribosomal subunit protein bS20 from Metamycoplasma arthritidis (strain 158L3-1) (Mycoplasma arthritidis).